Reading from the N-terminus, the 234-residue chain is MLTLQQVHYYYHQDLFAFDLEVEAGSIVALMGPSGAGKSTLLALLAGFIAPQSGQMALDGRLLNTLSPAQRPFSMLFQEHNLFAHLTVRDNIALGLHPGLKLTSQQQKQVEQAAKQVGIEAYLDRLPEQLSGGQRQRVALARCFVQPNPIWLLDEPFSALDPVLRDEMLSLVKQLAQERAITVLMVTHHLSDARAIASHFAYIDKGTIAAHGPIASLNEKHSHPELVEFFQAAV.

The ABC transporter domain maps to 2 to 230 (LTLQQVHYYY…HSHPELVEFF (229 aa)). 32–39 (GPSGAGKS) serves as a coordination point for ATP.

Belongs to the ABC transporter superfamily. Thiamine importer (TC 3.A.1.19.1) family. As to quaternary structure, the complex is composed of two ATP-binding proteins (ThiQ), two transmembrane proteins (ThiP) and a solute-binding protein (ThiB).

The protein resides in the cell inner membrane. The enzyme catalyses thiamine(out) + ATP + H2O = thiamine(in) + ADP + phosphate + H(+). Its function is as follows. Part of the ABC transporter complex ThiBPQ involved in thiamine import. Responsible for energy coupling to the transport system. The protein is Thiamine import ATP-binding protein ThiQ of Vibrio vulnificus (strain CMCP6).